The sequence spans 292 residues: MSQDVNELSKQPTPDKAEDNAFFPSPYSLSQYTAPKTDFDGVEHKGAYKDGKWKVLMIAAEERYVLLENGKMFSTGNHPVEMLLPLHHLMEAGFDVDVATLSGYPVKLELWAMPTEDEAVISTYNKLKEKLKQPKKLADVIKNELGPDSDYLSVFIPGGHAAVVGISESEDVQQTLDWALDNDRFIVTLCHGPAALLSAGLNREKSTLEGYSVCVFPDSLDEGANIEIGYLPGRLKWLVADLLTKQGLKVVNDDMTGRTLKDRKLLTGDSPLASNELGKLAVNEMLNAIQNK.

Polar residues predominate over residues 1–12 (MSQDVNELSKQP). A disordered region spans residues 1-23 (MSQDVNELSKQPTPDKAEDNAFF). Cysteine 190 serves as the catalytic Nucleophile.

It belongs to the peptidase C56 family. HchA subfamily.

The protein resides in the cytoplasm. The catalysed reaction is N(omega)-(1-hydroxy-2-oxopropyl)-L-arginyl-[protein] + H2O = lactate + L-arginyl-[protein] + H(+). It catalyses the reaction N(6)-(1-hydroxy-2-oxopropyl)-L-lysyl-[protein] + H2O = lactate + L-lysyl-[protein] + H(+). The enzyme catalyses S-(1-hydroxy-2-oxopropyl)-L-cysteinyl-[protein] + H2O = lactate + L-cysteinyl-[protein] + H(+). It carries out the reaction N(omega)-(1-hydroxy-2-oxoethyl)-L-arginyl-[protein] + H2O = L-arginyl-[protein] + glycolate + H(+). The catalysed reaction is N(6)-(1-hydroxy-2-oxoethyl)-L-lysyl-[protein] + H2O = glycolate + L-lysyl-[protein] + H(+). It catalyses the reaction S-(1-hydroxy-2-oxoethyl)-L-cysteinyl-[protein] + H2O = glycolate + L-cysteinyl-[protein] + H(+). The enzyme catalyses N(2)-(1-hydroxy-2-oxopropyl)-dGTP + H2O = lactate + dGTP + H(+). It carries out the reaction N(2)-(1-hydroxy-2-oxopropyl)-GTP + H2O = lactate + GTP + H(+). The catalysed reaction is N(2)-(1-hydroxy-2-oxopropyl)-GDP + H2O = lactate + GDP + H(+). It catalyses the reaction N(2)-(1-hydroxy-2-oxopropyl)-GMP + H2O = lactate + GMP + H(+). The enzyme catalyses N(2)-(1-hydroxy-2-oxoethyl)-dGTP + H2O = dGTP + glycolate + H(+). It carries out the reaction N(2)-(1-hydroxy-2-oxoethyl)-GTP + H2O = glycolate + GTP + H(+). The catalysed reaction is N(2)-(1-hydroxy-2-oxoethyl)-GDP + H2O = glycolate + GDP + H(+). It catalyses the reaction N(2)-(1-hydroxy-2-oxoethyl)-GMP + H2O = glycolate + GMP + H(+). The enzyme catalyses an N(2)-(1-hydroxy-2-oxopropyl)-guanosine in RNA + H2O = a guanosine in RNA + lactate + H(+). It carries out the reaction an N(2)-(1-hydroxy-2-oxopropyl)-2'-deoxyguanosine in DNA + H2O = a 2'-deoxyguanosine in DNA + lactate + H(+). The catalysed reaction is an N(2)-(1-hydroxy-2-oxoethyl)-guanosine in RNA + H2O = a guanosine in RNA + glycolate + H(+). It catalyses the reaction an N(2)-(1-hydroxy-2-oxoethyl)-2'-deoxyguanosine in DNA + H2O = a 2'-deoxyguanosine in DNA + glycolate + H(+). Functionally, protein and nucleotide deglycase that catalyzes the deglycation of the Maillard adducts formed between amino groups of proteins or nucleotides and reactive carbonyl groups of glyoxals. Thus, functions as a protein deglycase that repairs methylglyoxal- and glyoxal-glycated proteins, and releases repaired proteins and lactate or glycolate, respectively. Deglycates cysteine, arginine and lysine residues in proteins, and thus reactivates these proteins by reversing glycation by glyoxals. Acts on early glycation intermediates (hemithioacetals and aminocarbinols), preventing the formation of Schiff bases and advanced glycation endproducts (AGE). Also functions as a nucleotide deglycase able to repair glycated guanine in the free nucleotide pool (GTP, GDP, GMP, dGTP) and in DNA and RNA. Is thus involved in a major nucleotide repair system named guanine glycation repair (GG repair), dedicated to reversing methylglyoxal and glyoxal damage via nucleotide sanitization and direct nucleic acid repair. Plays an important role in protecting cells from carbonyl stress. The chain is Protein/nucleic acid deglycase HchA from Staphylococcus aureus (strain MSSA476).